The following is a 419-amino-acid chain: UDP-N-acetylglucosamine 1-carboxyvinyltransferase (419 aa).

22 to 23 contributes to the phosphoenolpyruvate binding site; that stretch reads KN. UDP-N-acetyl-alpha-D-glucosamine is bound at residue Arg-91. The Proton donor role is filled by Cys-115. Cys-115 bears the 2-(S-cysteinyl)pyruvic acid O-phosphothioketal mark. Residues 120-124, 160-163, Asp-305, and Val-327 contribute to the UDP-N-acetyl-alpha-D-glucosamine site; these read RPVDL and KVSV.

The protein belongs to the EPSP synthase family. MurA subfamily.

Its subcellular location is the cytoplasm. The catalysed reaction is phosphoenolpyruvate + UDP-N-acetyl-alpha-D-glucosamine = UDP-N-acetyl-3-O-(1-carboxyvinyl)-alpha-D-glucosamine + phosphate. The protein operates within cell wall biogenesis; peptidoglycan biosynthesis. In terms of biological role, cell wall formation. Adds enolpyruvyl to UDP-N-acetylglucosamine. The chain is UDP-N-acetylglucosamine 1-carboxyvinyltransferase from Escherichia coli (strain K12 / MC4100 / BW2952).